We begin with the raw amino-acid sequence, 229 residues long: MKFLANLKCNHTRASFAEYAKILDANLSADDDVSVFVPFTAFDAKEHKFKLGAQNFYPCVSGAFTGEIGKAQLDEFGISSVLIGHSERREILGESERLLRAKFDFAAKNGWQIIYCVGENLSVNEAGGTKEFLRTQLGNIDTGYANLIVAYEPIWAIGTGKSASAEQIAEILGFLRTLTLAPLLYGGSVNAANIGEIARIRECGGVLVGTASWDATNFLNLIASSRERI.

Substrate is bound at residue 6–8 (NLK). Residue His85 is the Electrophile of the active site. Catalysis depends on Glu152, which acts as the Proton acceptor. Gly158 and Ser188 together coordinate substrate.

It belongs to the triosephosphate isomerase family. As to quaternary structure, homodimer.

It localises to the cytoplasm. The enzyme catalyses D-glyceraldehyde 3-phosphate = dihydroxyacetone phosphate. It participates in carbohydrate biosynthesis; gluconeogenesis. Its pathway is carbohydrate degradation; glycolysis; D-glyceraldehyde 3-phosphate from glycerone phosphate: step 1/1. In terms of biological role, involved in the gluconeogenesis. Catalyzes stereospecifically the conversion of dihydroxyacetone phosphate (DHAP) to D-glyceraldehyde-3-phosphate (G3P). This is Triosephosphate isomerase from Campylobacter curvus (strain 525.92).